Here is a 463-residue protein sequence, read N- to C-terminus: MVIPAELIQKALKQQSGWGFTEGLVLGQLSVIITVIIILKFVIFAENKSPKKGNDMTAVSAKDKEAEHVAMGGQTANGVKTSGVRRNKSSTNLRNRLATGAAGASISRPGSSRVSMVRSTSGAVPVLGQNGGATPRGMAGSSVAGSTSNLAVPVPTTPTIAEGIEPENDSTLQDDSAIIDLDLDLDLSPVDEILHKTCYQLSSHAPESLDWFNVLVAQIITQLRFDAKANNNLNLLNSLDAAFNSKRPDFIDRINVTEINLGDDYPILSNCKITHKGTGPAGSGAASGNNMPNNAEYDDSRLEAQMDIDLSDTITLGIETRLNLNQPKILSPFLSLSTSLPVSLSVTIVRFTARLNISLYQQIEQTEEDEKDKRDTILSINFEPDYKLQLSVKSLVGSRSRLQNVPTLESLVDSKIQKWFRDHYVEPHQMIFILPSLWPRKKRSATAGAAGTATGADTASGSS.

The Lumenal segment spans residues 1 to 23 (MVIPAELIQKALKQQSGWGFTEG). Residues 24-44 (LVLGQLSVIITVIIILKFVIF) traverse the membrane as a helical segment. The Cytoplasmic segment spans residues 45–463 (AENKSPKKGN…TGADTASGSS (419 aa)). Positions 72–152 (GGQTANGVKT…VAGSTSNLAV (81 aa)) are disordered. The span at 108–122 (RPGSSRVSMVRSTSG) shows a compositional bias: polar residues. The SMP-LTD domain maps to 205–435 (APESLDWFNV…EPHQMIFILP (231 aa)).

It belongs to the MMM1 family. In terms of assembly, homodimer. Component of the ER-mitochondria encounter structure (ERMES) or MDM complex, composed of MMM1, MDM10, MDM12 and MDM34. An MMM1 homodimer associates with one molecule of MDM12 on each side in a pairwise head-to-tail manner, and the SMP-LTD domains of MMM1 and MDM12 generate a continuous hydrophobic tunnel for phospholipid trafficking.

It is found in the endoplasmic reticulum membrane. Functionally, component of the ERMES/MDM complex, which serves as a molecular tether to connect the endoplasmic reticulum (ER) and mitochondria. Components of this complex are involved in the control of mitochondrial shape and protein biogenesis, and function in nonvesicular lipid trafficking between the ER and mitochondria. The MDM12-MMM1 subcomplex functions in the major beta-barrel assembly pathway that is responsible for biogenesis of all outer membrane beta-barrel proteins, and acts in a late step after the SAM complex. The MDM10-MDM12-MMM1 subcomplex further acts in the TOM40-specific pathway after the action of the MDM12-MMM1 complex. Essential for establishing and maintaining the structure of mitochondria and maintenance of mtDNA nucleoids. The sequence is that of Maintenance of mitochondrial morphology protein 1-2 from Yarrowia lipolytica (strain CLIB 122 / E 150) (Yeast).